A 63-amino-acid chain; its full sequence is Large ribosomal subunit protein uL29 (63 aa).

Belongs to the universal ribosomal protein uL29 family.

The sequence is that of Large ribosomal subunit protein uL29 from Flavobacterium johnsoniae (strain ATCC 17061 / DSM 2064 / JCM 8514 / BCRC 14874 / CCUG 350202 / NBRC 14942 / NCIMB 11054 / UW101) (Cytophaga johnsonae).